The chain runs to 314 residues: tRNA dimethylallyltransferase (314 aa).

ATP is bound at residue Gly12–Thr19. Position 14-19 (Thr14–Thr19) interacts with substrate. Interaction with substrate tRNA regions lie at residues Asp37–Leu40 and Gln162–Arg166.

The protein belongs to the IPP transferase family. In terms of assembly, monomer. Mg(2+) serves as cofactor.

The enzyme catalyses adenosine(37) in tRNA + dimethylallyl diphosphate = N(6)-dimethylallyladenosine(37) in tRNA + diphosphate. Its function is as follows. Catalyzes the transfer of a dimethylallyl group onto the adenine at position 37 in tRNAs that read codons beginning with uridine, leading to the formation of N6-(dimethylallyl)adenosine (i(6)A). The chain is tRNA dimethylallyltransferase from Acinetobacter baumannii (strain SDF).